The sequence spans 254 residues: 3-deoxy-manno-octulosonate cytidylyltransferase (254 aa).

It belongs to the KdsB family.

The protein resides in the cytoplasm. It carries out the reaction 3-deoxy-alpha-D-manno-oct-2-ulosonate + CTP = CMP-3-deoxy-beta-D-manno-octulosonate + diphosphate. Its pathway is nucleotide-sugar biosynthesis; CMP-3-deoxy-D-manno-octulosonate biosynthesis; CMP-3-deoxy-D-manno-octulosonate from 3-deoxy-D-manno-octulosonate and CTP: step 1/1. The protein operates within bacterial outer membrane biogenesis; lipopolysaccharide biosynthesis. Its function is as follows. Activates KDO (a required 8-carbon sugar) for incorporation into bacterial lipopolysaccharide in Gram-negative bacteria. The protein is 3-deoxy-manno-octulosonate cytidylyltransferase of Nitrobacter winogradskyi (strain ATCC 25391 / DSM 10237 / CIP 104748 / NCIMB 11846 / Nb-255).